Here is a 251-residue protein sequence, read N- to C-terminus: PF03932 family protein CutC (251 aa).

Belongs to the CutC family.

The protein localises to the cytoplasm. In Edwardsiella ictaluri (strain 93-146), this protein is PF03932 family protein CutC.